Here is a 415-residue protein sequence, read N- to C-terminus: Glucose-6-phosphate isomerase (415 aa).

Glu-267 (proton donor) is an active-site residue. Residues His-293 and Lys-406 contribute to the active site.

The protein belongs to the GPI family.

The protein localises to the cytoplasm. The enzyme catalyses alpha-D-glucose 6-phosphate = beta-D-fructose 6-phosphate. It functions in the pathway carbohydrate biosynthesis; gluconeogenesis. The protein operates within carbohydrate degradation; glycolysis; D-glyceraldehyde 3-phosphate and glycerone phosphate from D-glucose: step 2/4. Functionally, catalyzes the reversible isomerization of glucose-6-phosphate to fructose-6-phosphate. The polypeptide is Glucose-6-phosphate isomerase (Thermus thermophilus (strain ATCC 27634 / DSM 579 / HB8)).